The sequence spans 1212 residues: MTQNPVKFVHPFPFEVPFFNKGMDKFVMKHLIRRFVNQFGMTYTSHILDQLKILGFQQATDAAISLGIDDLLTTPSKAWLIQDAQQRGFASERHHDYGNVHAVEKLRQLIEVWHATSEYLRREMNPNFRMTDPLNPVHMMSFSGARGSTSQVHQLVGMRGLMSDPRGKIVDLPIQGNFREGLSLTEYIISCYGARKGVVDTSIRTADAGYLTRRLVEVVQHLVVRKVDCGTIQGLFVNLIQDRETIKNKFVLQTLIGRVLADDVYIHGRCIATRNEDIGIKLANQLYYFQVQPIYIRTPFTCKSIYWICQLCYGRNTTHSNLIELGEAVGIIAGQSIGEPGTQLTLRTFHTGGVFTGDIAEHVRAPFTGKIEFNENLVYPTRTRHGHPAYICYNSLDVTINNQYEVQNLTIPPESLLFIQNNQLVESEQVIAEVRAKRSPFKEKVKKHIYSDLTGEMHRSIPMSNLILETTHLWVLSGSIYESVVVPFSSDQDQVDIPELLLDKHKSLSNYSVDQVKHESVDSNCFEKGKKILNYFETDRTIPNEHKDSIYSAILFENTHMSVKKEKNKLIVPLWCDKQWGKRRIPCPDFIFRIPRGQGILLNKKHIFAFLNDPRSKMIKYGNILGGYSIEKKRNSLENQLDGGPRLKIKKTYASLISVGTNEIIINMIQISLLKYPFFNIAKRENIASSPFLFHNKLGHTNLNDQSKLLSKGTIRSLPNENKKDESFTILSPSDFLQIVLFHDLKCLNTVKKLDANKKRIELSGLLGHLHSIANRFPYSHFMTYKKVLLTERSISNNDSNNFQLAKCYFMDEKREIYQFDSCRNIIFDFFNLNLYFCLSNFFEKTFSVVSLGQFCSESIWISEDKQLQGSGQIVVVHEESFVIRLAKPYLGARGATLNSYYGKILSQGDTLITMLYERLKSDDIIQGLPKVEQLSEARSNTSISKNRKKRFQKLNRYLAIFFGNFWGSFTSVRMTMEDSQNQLVDEIQKVYRSQGVQISDKHIEIIVRQITSKVLVVDVDRSENKNWENGLGSLFLPGELVGLSRVQRMDRALEKRINYRTILLGMTNASLNTQSFLSEASFQETAQVLAKSALQGRIDWLKGLKENVILGGMIPVGTGFNRLVKRSKMNSRTSQKSLFINKVEDFFFEHQDQALILSLKQKETSKNKKETSKNKKETSKNKKETSKNKKETSKNKKETSKNKKEASKNKK.

Zn(2+)-binding residues include C229, C302, C309, and C312. Positions 1162–1212 (QKETSKNKKETSKNKKETSKNKKETSKNKKETSKNKKETSKNKKEASKNKK) are disordered.

The protein belongs to the RNA polymerase beta' chain family. RpoC2 subfamily. In terms of assembly, in plastids the minimal PEP RNA polymerase catalytic core is composed of four subunits: alpha, beta, beta', and beta''. When a (nuclear-encoded) sigma factor is associated with the core the holoenzyme is formed, which can initiate transcription. Requires Zn(2+) as cofactor.

Its subcellular location is the plastid. The protein localises to the chloroplast. The enzyme catalyses RNA(n) + a ribonucleoside 5'-triphosphate = RNA(n+1) + diphosphate. Functionally, DNA-dependent RNA polymerase catalyzes the transcription of DNA into RNA using the four ribonucleoside triphosphates as substrates. This is DNA-directed RNA polymerase subunit beta'' from Cryptomeria japonica (Japanese cedar).